Reading from the N-terminus, the 913-residue chain is Probable TonB-dependent receptor HI_1217 (913 aa).

The N-terminal stretch at 1–27 (MKKAIKLNLITLGLINTIGMTITQAQA) is a signal peptide. Residues 42 to 165 (SNDKKPFTEA…LAGSANFRTL (124 aa)) form the TBDR plug domain. The TBDR beta-barrel domain occupies 176 to 913 (PFGIILKGMT…TYILSLNYKF (738 aa)). Residues 896–913 (LYNFARGRTYILSLNYKF) carry the TonB C-terminal box motif.

It belongs to the TonB-dependent receptor family.

The protein localises to the cell outer membrane. Functionally, probable receptor, TonB-dependent. In Haemophilus influenzae (strain ATCC 51907 / DSM 11121 / KW20 / Rd), this protein is Probable TonB-dependent receptor HI_1217.